A 374-amino-acid chain; its full sequence is Queuine tRNA-ribosyltransferase (374 aa).

Asp-89 (proton acceptor) is an active-site residue. Residues 89 to 93 (DSGGF), Asp-143, Gln-187, and Gly-214 each bind substrate. The tract at residues 245–251 (GVGKPED) is RNA binding. Catalysis depends on Asp-264, which acts as the Nucleophile. The segment at 269–273 (TRNAR) is RNA binding; important for wobble base 34 recognition. Zn(2+) contacts are provided by Cys-302, Cys-304, Cys-307, and His-333.

It belongs to the queuine tRNA-ribosyltransferase family. In terms of assembly, homodimer. Within each dimer, one monomer is responsible for RNA recognition and catalysis, while the other monomer binds to the replacement base PreQ1. The cofactor is Zn(2+).

The catalysed reaction is 7-aminomethyl-7-carbaguanine + guanosine(34) in tRNA = 7-aminomethyl-7-carbaguanosine(34) in tRNA + guanine. Its pathway is tRNA modification; tRNA-queuosine biosynthesis. Functionally, catalyzes the base-exchange of a guanine (G) residue with the queuine precursor 7-aminomethyl-7-deazaguanine (PreQ1) at position 34 (anticodon wobble position) in tRNAs with GU(N) anticodons (tRNA-Asp, -Asn, -His and -Tyr). Catalysis occurs through a double-displacement mechanism. The nucleophile active site attacks the C1' of nucleotide 34 to detach the guanine base from the RNA, forming a covalent enzyme-RNA intermediate. The proton acceptor active site deprotonates the incoming PreQ1, allowing a nucleophilic attack on the C1' of the ribose to form the product. After dissociation, two additional enzymatic reactions on the tRNA convert PreQ1 to queuine (Q), resulting in the hypermodified nucleoside queuosine (7-(((4,5-cis-dihydroxy-2-cyclopenten-1-yl)amino)methyl)-7-deazaguanosine). This is Queuine tRNA-ribosyltransferase from Yersinia pseudotuberculosis serotype O:1b (strain IP 31758).